A 402-amino-acid polypeptide reads, in one-letter code: B3 domain-containing protein Os01g0723500 (402 aa).

The segment at residues 18–121 is a DNA-binding region (TF-B3 1); it reads RPHFFKVLVG…RFTAMVFDRT (104 aa). The disordered stretch occupies residues 126 to 203; that stretch reads EDLMGGGGGD…VKNEEDADEL (78 aa). Residues 152-162 show a composition bias toward basic and acidic residues; sequence DAARPKKDSVG. Residues 173-186 show a composition bias toward polar residues; that stretch reads SGGQPLQIVDSSWT. A DNA-binding region (TF-B3 2) is located at residues 289–381; the sequence is CVIRMSTMHV…EFRVHIFRVV (93 aa).

Its subcellular location is the nucleus. The polypeptide is B3 domain-containing protein Os01g0723500 (Oryza sativa subsp. japonica (Rice)).